The following is a 498-amino-acid chain: TORTIFOLIA1-like protein 5 (498 aa).

HEAT repeat units lie at residues 56-93 (ETFSLFINCLQSTDSSAKSPVRKHCVSLLSVLSRSHGD), 97-134 (PHLSKMVSTVLRRLRDPDSSVRAACVAASVDMTTNITG), 136-173 (PFSILFGPMIETVIHDCDPNAQISAAMCLAAAVDAADE), 177-214 (EQLQKALPKIGKLLKSEGFKAKAELLGAIGTVIGAVGG), and 219-257 (KAVLDWLLPNVSEFLSSDDWRARKAAAEAMARVAMVEEE). Positions 296-423 (EGDSTEVSES…SSSQAKSNAE (128 aa)) are disordered. The span at 300-322 (TEVSESSSSSKSASSGLSATSGK) shows a compositional bias: low complexity. Residues 343-366 (NDVEPLDRGDTPKDVEQEAVVSKE) show a composition bias toward basic and acidic residues. Over residues 390 to 400 (NGSNKSQVVQS) the composition is skewed to polar residues. S426 is subject to Phosphoserine.

The chain is TORTIFOLIA1-like protein 5 from Arabidopsis thaliana (Mouse-ear cress).